A 325-amino-acid chain; its full sequence is Beta-ketoacyl-[acyl-carrier-protein] synthase III (325 aa).

Active-site residues include cysteine 112 and histidine 250. Residues 251–255 (QANSR) are ACP-binding. Residue asparagine 280 is part of the active site.

The protein belongs to the thiolase-like superfamily. FabH family. As to quaternary structure, homodimer.

Its subcellular location is the cytoplasm. It catalyses the reaction malonyl-[ACP] + acetyl-CoA + H(+) = 3-oxobutanoyl-[ACP] + CO2 + CoA. It functions in the pathway lipid metabolism; fatty acid biosynthesis. Its function is as follows. Catalyzes the condensation reaction of fatty acid synthesis by the addition to an acyl acceptor of two carbons from malonyl-ACP. Catalyzes the first condensation reaction which initiates fatty acid synthesis and may therefore play a role in governing the total rate of fatty acid production. Possesses both acetoacetyl-ACP synthase and acetyl transacylase activities. Its substrate specificity determines the biosynthesis of branched-chain and/or straight-chain of fatty acids. The sequence is that of Beta-ketoacyl-[acyl-carrier-protein] synthase III from Lactococcus lactis subsp. cremoris (strain MG1363).